A 712-amino-acid polypeptide reads, in one-letter code: Cadherin-13 (712 aa).

The first 22 residues, 1–22, serve as a signal peptide directing secretion; the sequence is MQHKTQLTLSFLLSQVLLLACA. A propeptide spanning residues 23-138 is cleaved from the precursor; the sequence is EDLECTPGFQ…GNLGIPRQKR (116 aa). N-linked (GlcNAc...) asparagine glycosylation is present at Asn86. Cadherin domains are found at residues 143–245, 246–363, 364–477, 478–585, and 586–680; these read TPIL…RPMF, KEGP…PPEF, TKKE…GPVF, HPNP…VPSL, and YPTL…LQVC. N-linked (GlcNAc...) asparagine glycans are attached at residues Asn382, Asn500, Asn530, Asn638, and Asn671. Asp693 carries GPI-anchor amidated aspartate lipidation. Positions 694-712 are cleaved as a propeptide — removed in mature form; sequence ALHISMTLILLSLFSLFCL.

As to quaternary structure, by contrast to classical cadherins, homodimerization in trans is not mediated by cadherin EC1 domain strand-swapping, but instead through a homophilic adhesive interface which joins two elongated EC1-EC2 domains through a region near their Ca2+-binding sites to form a tetrahedral, X-like shape. In terms of tissue distribution, neural tissues. Also found in muscles; kidney and retina.

It localises to the cell membrane. Its subcellular location is the cytoplasm. In terms of biological role, cadherins are calcium-dependent cell adhesion proteins. They preferentially interact with themselves in a homophilic manner in connecting cells; cadherins may thus contribute to the sorting of heterogeneous cell types. May act as a negative regulator of neural cell growth. This chain is Cadherin-13 (CDH13), found in Gallus gallus (Chicken).